We begin with the raw amino-acid sequence, 193 residues long: T-cell receptor-associated transmembrane adapter 1 (193 aa).

Topologically, residues 1-10 (MSGNAECHFS) are extracellular. The chain crosses the membrane as a helical; Signal-anchor for type III membrane protein span at residues 11-31 (IWAILAFLGLALTISLIFNIF). The Cytoplasmic portion of the chain corresponds to 32-193 (HCVEKQRQEK…LHSLDYDLAQ (162 aa)). Position 46 is a phosphoserine (serine 46). At tyrosine 80 the chain carries Phosphotyrosine. The interval 80 to 83 (YEQM) is interaction with PIK3R1. A disordered region spans residues 116 to 166 (NEGKRRKPRKQKSHLSDKDEEGQMHAKDISLSKTTLVDSYPPESEAIEENI). Residues 119-128 (KRRKPRKQKS) show a composition bias toward basic residues. A compositionally biased stretch (basic and acidic residues) spans 129-145 (HLSDKDEEGQMHAKDIS).

As to quaternary structure, homodimer; disulfide-linked. Interacts with CD3Z. When phosphorylated, interacts with PIK3R1. In terms of processing, phosphorylated on tyrosines upon TCR activation.

It is found in the cell membrane. Stabilizes the TCR (T-cell antigen receptor)/CD3 complex at the surface of T-cells. In Bos taurus (Bovine), this protein is T-cell receptor-associated transmembrane adapter 1 (TRAT1).